We begin with the raw amino-acid sequence, 186 residues long: Ribosome-recycling factor (186 aa).

It belongs to the RRF family.

The protein localises to the cytoplasm. Responsible for the release of ribosomes from messenger RNA at the termination of protein biosynthesis. May increase the efficiency of translation by recycling ribosomes from one round of translation to another. The protein is Ribosome-recycling factor of Burkholderia multivorans (strain ATCC 17616 / 249).